A 294-amino-acid chain; its full sequence is Protease HtpX homolog (294 aa).

Transmembrane regions (helical) follow at residues 12–32 and 34–54; these read VLFG…ASSF and SPGV…YSYW. His-138 contributes to the Zn(2+) binding site. Glu-139 is a catalytic residue. His-142 provides a ligand contact to Zn(2+). Helical transmembrane passes span 152-172 and 188-208; these read SVAG…VFFG and LALL…QLAI. Glu-213 serves as a coordination point for Zn(2+).

The protein belongs to the peptidase M48B family. Requires Zn(2+) as cofactor.

The protein resides in the cell membrane. The chain is Protease HtpX homolog from Kineococcus radiotolerans (strain ATCC BAA-149 / DSM 14245 / SRS30216).